A 210-amino-acid polypeptide reads, in one-letter code: 2-dehydro-3-deoxy-phosphogluconate aldolase (210 aa).

Glutamate 41 functions as the Proton acceptor in the catalytic mechanism. Pyruvate is bound by residues arginine 45, threonine 69, and lysine 129. Lysine 129 (schiff-base intermediate with substrate) is an active-site residue.

Belongs to the KHG/KDPG aldolase family. In terms of assembly, homotrimer.

Its subcellular location is the cytoplasm. The enzyme catalyses 2-dehydro-3-deoxy-6-phospho-D-gluconate = D-glyceraldehyde 3-phosphate + pyruvate. It participates in carbohydrate acid metabolism; 2-dehydro-3-deoxy-D-gluconate degradation; D-glyceraldehyde 3-phosphate and pyruvate from 2-dehydro-3-deoxy-D-gluconate: step 2/2. Catalyzes the reversible, stereospecific retro-aldol cleavage of 2-keto-3-deoxy-6-phosphogluconate (KDPG) to pyruvate and D-glyceraldehyde-3-phosphate. The chain is 2-dehydro-3-deoxy-phosphogluconate aldolase (eda) from Treponema pallidum (strain Nichols).